The primary structure comprises 453 residues: Bifunctional protein GlmU (453 aa).

The pyrophosphorylase stretch occupies residues 1 to 226 (MVAIAILAAG…YEEILGINDR (226 aa)). UDP-N-acetyl-alpha-D-glucosamine-binding positions include 7 to 10 (LAAG), lysine 21, glutamine 73, and 78 to 79 (GT). Aspartate 103 is a binding site for Mg(2+). Glycine 140, glutamate 155, asparagine 170, and asparagine 224 together coordinate UDP-N-acetyl-alpha-D-glucosamine. Position 224 (asparagine 224) interacts with Mg(2+). The interval 227 to 247 (KQLALAYQILQNRIKDQAMAA) is linker. Residues 248 to 453 (GVTLIDPDSI…GWRLKQPDPT (206 aa)) form an N-acetyltransferase region. UDP-N-acetyl-alpha-D-glucosamine-binding residues include arginine 329 and lysine 347. The active-site Proton acceptor is histidine 359. Positions 362 and 373 each coordinate UDP-N-acetyl-alpha-D-glucosamine. Acetyl-CoA is bound by residues alanine 376, 382-383 (NY), serine 401, alanine 419, and arginine 436.

This sequence in the N-terminal section; belongs to the N-acetylglucosamine-1-phosphate uridyltransferase family. It in the C-terminal section; belongs to the transferase hexapeptide repeat family. In terms of assembly, homotrimer. The cofactor is Mg(2+).

It localises to the cytoplasm. It carries out the reaction alpha-D-glucosamine 1-phosphate + acetyl-CoA = N-acetyl-alpha-D-glucosamine 1-phosphate + CoA + H(+). The enzyme catalyses N-acetyl-alpha-D-glucosamine 1-phosphate + UTP + H(+) = UDP-N-acetyl-alpha-D-glucosamine + diphosphate. It functions in the pathway nucleotide-sugar biosynthesis; UDP-N-acetyl-alpha-D-glucosamine biosynthesis; N-acetyl-alpha-D-glucosamine 1-phosphate from alpha-D-glucosamine 6-phosphate (route II): step 2/2. It participates in nucleotide-sugar biosynthesis; UDP-N-acetyl-alpha-D-glucosamine biosynthesis; UDP-N-acetyl-alpha-D-glucosamine from N-acetyl-alpha-D-glucosamine 1-phosphate: step 1/1. The protein operates within bacterial outer membrane biogenesis; LPS lipid A biosynthesis. Catalyzes the last two sequential reactions in the de novo biosynthetic pathway for UDP-N-acetylglucosamine (UDP-GlcNAc). The C-terminal domain catalyzes the transfer of acetyl group from acetyl coenzyme A to glucosamine-1-phosphate (GlcN-1-P) to produce N-acetylglucosamine-1-phosphate (GlcNAc-1-P), which is converted into UDP-GlcNAc by the transfer of uridine 5-monophosphate (from uridine 5-triphosphate), a reaction catalyzed by the N-terminal domain. The sequence is that of Bifunctional protein GlmU from Cyanothece sp. (strain PCC 7425 / ATCC 29141).